An 813-amino-acid chain; its full sequence is Immunoglobulin superfamily DCC subclass member 3 (813 aa).

The interval 1–21 (MAEPRTASPRRLPALRRPGFL) is disordered. Positions 1 to 47 (MAEPRTASPRRLPALRRPGFLPPLLPPPPPPLLLLLLLLPLPAPSLG) are cleaved as a signal peptide. Residues 9–19 (PRRLPALRRPG) are compositionally biased toward low complexity. Ig-like C2-type domains are found at residues 49-151 (GHSA…ATMS), 151-232 (SDFH…VRVS), 250-333 (PTIL…RTAQ), and 341-428 (PAEF…ARLT). Intrachain disulfides connect Cys75–Cys129 and Cys172–Cys221. An N-linked (GlcNAc...) asparagine glycan is attached at Asn105. Asn258 carries N-linked (GlcNAc...) asparagine glycosylation. 2 cysteine pairs are disulfide-bonded: Cys271-Cys319 and Cys363-Cys412. Asn393 and Asn394 each carry an N-linked (GlcNAc...) asparagine glycan. Fibronectin type-III domains lie at 438 to 532 (PPRN…TLGE) and 535 to 630 (VPPP…ASER). N-linked (GlcNAc...) asparagine glycans are attached at residues Asn592, Asn616, and Asn646. A helical transmembrane segment spans residues 653-673 (IVIGIHIGVTCIIFCVLFLLF). Disordered stretches follow at residues 689–724 (LSPP…EKPV) and 775–813 (TTEA…AAPQ).

The protein belongs to the immunoglobulin superfamily. DCC family. In terms of tissue distribution, detected in cerebellum, kidney, heart, lung, skeletal muscle and spleen.

Its subcellular location is the membrane. This Mus musculus (Mouse) protein is Immunoglobulin superfamily DCC subclass member 3 (Igdcc3).